The primary structure comprises 1410 residues: Condensin-1 complex subunit CAP-D2 (1410 aa).

Residues 469 to 480 show a composition bias toward basic and acidic residues; sequence LEPTEHASKEST. Disordered stretches follow at residues 469 to 492, 504 to 525, 860 to 879, and 1208 to 1410; these read LEPTEHASKESTSDGESCNGDGEI, HQDSLSDSCQPENGEEISEKDV, KTKKDKPAAESQNTEENLEA, and KEQE…GSRS. Residues 869-879 show a composition bias toward polar residues; the sequence is ESQNTEENLEA. The span at 1208-1226 shows a compositional bias: basic and acidic residues; the sequence is KEQEETARNAEVHREKTKT. Acidic residues-rich tracts occupy residues 1240–1284 and 1306–1319; these read PVEE…EEPD and IETEPEEEQSDSEP. Over residues 1323-1339 the composition is skewed to polar residues; that stretch reads QCGTTNPRSLNRKTSGD. Residues 1342 to 1365 show a composition bias toward acidic residues; that stretch reads IETESEEEQSDSEEEPSDSEEEPD. Residues 1368–1379 show a composition bias toward polar residues; it reads QCGTTNPRSLNQ.

Belongs to the CND1 (condensin subunit 1) family. Component of the condensin complex. In terms of tissue distribution, present in buds.

Its subcellular location is the chromosome. The protein resides in the nucleus. Its function is as follows. Essential protein. Regulatory subunit of the condensin complex, a complex required for conversion of interphase chromatin into mitotic-like condense chromosomes. The condensin complex probably introduces positive supercoils into relaxed DNA in the presence of type I topoisomerases and converts nicked DNA into positive knotted forms in the presence of type II topoisomerases. Required for fertility, growth and euchromatin organization, but not for sister chromatid cohesion. Necessary to maintain normal structural integrity of the meiotic chromosomes during the two nuclear divisions of gametogenesis, especially to maintain compaction of the centromeric repeats and 45S rDNA. Also seems to be involved in crossover formation during meiotic prophase I. Prevents centromeric and pericentromeric heterochromatin repeats association. Contributes to the induction of stress-responsive genes in response to stress treatment. This chain is Condensin-1 complex subunit CAP-D2, found in Arabidopsis thaliana (Mouse-ear cress).